The chain runs to 385 residues: Guanine nucleotide-binding protein alpha-5 subunit (385 aa).

The N-myristoyl glycine moiety is linked to residue G2. Residue C6 is the site of S-palmitoyl cysteine attachment. Residues 32–385 form the G-alpha domain; the sequence is RKIKMLLLGI…NKNIETLSLE (354 aa). A G1 motif region spans residues 35 to 48; that stretch reads KMLLLGISDSGKST. GTP-binding positions include 40–47, 174–180, 199–203, 298–301, and A357; these read GISDSGKS, IHMRQTT, DVGGQ, and NKID. Residues S47 and T180 each coordinate Mg(2+). The G2 motif stretch occupies residues 172 to 180; sequence DLIHMRQTT. The interval 195–204 is G3 motif; the sequence is IRLIDVGGQK. The interval 294–301 is G4 motif; sequence MLFLNKID. The tract at residues 355–360 is G5 motif; that stretch reads TQATIT.

It belongs to the G-alpha family. In terms of assembly, g proteins are composed of 3 units; alpha, beta and gamma. The alpha chain contains the guanine nucleotide binding site.

Functionally, guanine nucleotide-binding proteins (G proteins) are involved as modulators or transducers in various transmembrane signaling systems. This chain is Guanine nucleotide-binding protein alpha-5 subunit (gpa-5), found in Caenorhabditis briggsae.